We begin with the raw amino-acid sequence, 472 residues long: H(+)/Cl(-) exchange transporter ClcA (472 aa).

The Cytoplasmic segment spans residues 1 to 32; sequence MKAETPSFEAHQFVRVRRGDAVRRLIQRDKTP. The helical transmembrane segment at 33-69 threads the bilayer; the sequence is LAVLFMAAVVGTLAGLVGVAFEKSVNWVQNQRIGALA. The Periplasmic segment spans residues 70 to 76; that stretch reads QVADHWY. The helical transmembrane segment at 77–100 threads the bilayer; it reads LVWPLAFILSALLAMVGYFLVRRF. Positions 106 to 110 match the Selectivity filter part_1 motif; that stretch reads GSGIP. S107 provides a ligand contact to chloride. Residues 109-116 constitute an intramembrane region (helical); that stretch reads IPEIEGAL. The Cytoplasmic portion of the chain corresponds to 117–123; the sequence is EELRPVR. 2 consecutive transmembrane segments (helical) span residues 124-141 and 148-166; these read WWRVLPVKFVGGMGTLGA and EGPMVQLGGNIGRMVLDVF. The Selectivity filter part_2 signature appears at 146 to 150; sequence GREGP. Over 167–176 the chain is Cytoplasmic; that stretch reads RMRSPEARHT. 2 consecutive intramembrane regions (helical) follow at residues 177-189 and 193-201; these read LLATGAASGLSAA and PLAGILFII. The Cytoplasmic portion of the chain corresponds to 202–214; sequence EEMRPQFRYNLIS. The chain crosses the membrane as a helical span at residues 215–232; it reads IKAVFTGVIMSSIVFRIF. At 233 to 252 the chain is on the periplasmic side; sequence NGEAAIIEVGKLSNAPVNTL. The chain crosses the membrane as a helical span at residues 253-281; that stretch reads WLYLVLGMLFGCFGPLFNFLVLRTQDLFQ. Residues 282–287 lie on the Cytoplasmic side of the membrane; sequence RIHGGN. The chain crosses the membrane as a helical span at residues 288 to 309; it reads IKKWVLIGGLIGGLCGLLGLMQ. Residues 310-329 are Periplasmic-facing; it reads PSAVGGGFNLIPIAAAGNFS. A run of 2 helical transmembrane segments spans residues 330–349 and 355–376; these read VGLLLFIFIARVVTTLICFS and GIFAPMLALGTLLGTAFGMAAI. The Selectivity filter part_3 signature appears at 355–359; the sequence is GIFAP. 2 residues coordinate chloride: I356 and F357. Topologically, residues 377-386 are periplasmic; sequence PLFPAYHLDA. The helical intramembrane region spans 387 to 401; it reads GTFAIAGMGALLAAS. Positions 402–404 form an intramembrane region, note=Loop between two helices; that stretch reads VRA. Residues 405–416 constitute an intramembrane region (helical); that stretch reads PLTGIVLVLEMT. Residues 417–421 constitute an intramembrane region (note=Loop between two helices); sequence DNYQL. Residues 422-438 traverse the membrane as a helical segment; the sequence is ILPMIITCLGATLLAQF. Topologically, residues 439-472 are cytoplasmic; the sequence is LGGKPLYSTILQRTLAKQEAEQAAKAQQAPRENT. Y445 provides a ligand contact to chloride.

The protein belongs to the chloride channel (TC 2.A.49) family. ClcA subfamily. As to quaternary structure, homodimer.

The protein resides in the cell inner membrane. The enzyme catalyses 2 chloride(in) + H(+)(out) = 2 chloride(out) + H(+)(in). In terms of biological role, proton-coupled chloride transporter. Functions as antiport system and exchanges two chloride ions for 1 proton. Probably acts as an electrical shunt for an outwardly-directed proton pump that is linked to amino acid decarboxylation, as part of the extreme acid resistance (XAR) response. In Klebsiella pneumoniae subsp. pneumoniae (strain ATCC 700721 / MGH 78578), this protein is H(+)/Cl(-) exchange transporter ClcA.